The sequence spans 739 residues: ABC transporter G family member 20 (739 aa).

The ABC transporter domain occupies 88 to 351; it reads LSFKDLTYSV…FSEFGHPIPE (264 aa). ATP is bound at residue 144–151; that stretch reads GASGSGKS. In terms of domain architecture, ABC transmembrane type-2 spans 433 to 643; the sequence is TEMLVIGKRS…PYEGVLQNEF (211 aa). Transmembrane regions (helical) follow at residues 452 to 472, 487 to 507, 528 to 548, 563 to 583, 593 to 613, and 712 to 732; these read LFGI…TIFW, FFAF…PVFL, VLAH…AFAA, FLFF…FVTF, IGFT…GFFI, and LWIT…TLLI.

This sequence belongs to the ABC transporter superfamily. ABCG family. Eye pigment precursor importer (TC 3.A.1.204) subfamily.

It is found in the membrane. The sequence is that of ABC transporter G family member 20 (ABCG20) from Arabidopsis thaliana (Mouse-ear cress).